A 181-amino-acid polypeptide reads, in one-letter code: Nucleoside diphosphate kinase, mitochondrial (181 aa).

Over residues 1 to 10 (MFRGGTHRLR) the composition is skewed to basic residues. The interval 1 to 22 (MFRGGTHRLRGQPGLSLPHGPR) is disordered. The N-terminal 24 residues, 1-24 (MFRGGTHRLRGQPGLSLPHGPRCY), are a transit peptide targeting the mitochondrion. ATP-binding residues include K40, F88, R116, T122, R133, and N143. H146 (pros-phosphohistidine intermediate) is an active-site residue.

It belongs to the NDK family. It depends on Mg(2+) as a cofactor. In terms of tissue distribution, highest levels in the liver and kidney with lower levels in the heart, brain and breast muscle.

The protein localises to the mitochondrion intermembrane space. It localises to the mitochondrion matrix. It carries out the reaction a 2'-deoxyribonucleoside 5'-diphosphate + ATP = a 2'-deoxyribonucleoside 5'-triphosphate + ADP. The catalysed reaction is a ribonucleoside 5'-diphosphate + ATP = a ribonucleoside 5'-triphosphate + ADP. With respect to regulation, feedback inhibition by ADP. Functionally, major role in the synthesis of nucleoside triphosphates other than ATP. The ATP gamma phosphate is transferred to the NDP beta phosphate via a ping-pong mechanism, using a phosphorylated active-site intermediate. Through the catalyzed exchange of gamma-phosphate between di- and triphosphonucleosides participates in regulation of intracellular nucleotide homeostasis. Binds to anionic phospholipids, predominantly to cardiolipin; the binding inhibits its phosphotransfer activity. Acts as a mitochondria-specific NDK coupled to respiration. Promotes the redistribution of cardiolipin between the mitochondrial inner membrane and outer membrane which is implicated in pro-apoptotic signaling. In Columba livia (Rock dove), this protein is Nucleoside diphosphate kinase, mitochondrial (NME4).